Reading from the N-terminus, the 162-residue chain is Shikimate kinase (162 aa).

11–16 is an ATP binding site; it reads GSGKSS. Position 15 (Ser-15) interacts with Mg(2+). 3 residues coordinate substrate: Asp-33, Arg-57, and Gly-80. ATP is bound at residue Arg-116. Arg-132 provides a ligand contact to substrate.

The protein belongs to the shikimate kinase family. In terms of assembly, monomer. It depends on Mg(2+) as a cofactor.

The protein localises to the cytoplasm. The catalysed reaction is shikimate + ATP = 3-phosphoshikimate + ADP + H(+). It functions in the pathway metabolic intermediate biosynthesis; chorismate biosynthesis; chorismate from D-erythrose 4-phosphate and phosphoenolpyruvate: step 5/7. Catalyzes the specific phosphorylation of the 3-hydroxyl group of shikimic acid using ATP as a cosubstrate. This is Shikimate kinase from Helicobacter pylori (strain P12).